A 302-amino-acid polypeptide reads, in one-letter code: Lysosomal thioesterase PPT2 (302 aa).

A signal peptide spans 1 to 27 (MPGLWRQRLPSAWALLLLPFLPLLMPA). Asn-60 carries an N-linked (GlcNAc...) asparagine glycan. 2 cysteine pairs are disulfide-bonded: Cys-109/Cys-117 and Cys-165/Cys-176. The active-site Nucleophile is the Ser-111. N-linked (GlcNAc...) asparagine glycosylation is found at Asn-190 and Asn-206. The active site involves Asp-228. Asn-245 carries an N-linked (GlcNAc...) asparagine glycan. A disulfide bridge connects residues Cys-276 and Cys-296. Residue His-283 is part of the active site. The N-linked (GlcNAc...) asparagine glycan is linked to Asn-289.

It belongs to the palmitoyl-protein thioesterase family. In terms of tissue distribution, expressed throughout the brain, primarily in neurons, and at lower levels in glial cells.

The protein localises to the lysosome. The enzyme catalyses hexadecanoyl-CoA + H2O = hexadecanoate + CoA + H(+). It carries out the reaction S-hexadecanoyl-N-acetylcysteamine + H2O = N-acetylcysteamine + hexadecanoate + H(+). Functionally, catalyzes the cleavage of thioester bonds from S-palmitoyl-CoA or S-palmitoyl-N-acetylcysteamine (unbranched structures) but does not have activity against palmitoylcysteine or palmitoylated proteins, branched structures or bulky head groups. Conversely, hydrolyzes both long and short chain fatty acyl-CoA substrate. This Mus musculus (Mouse) protein is Lysosomal thioesterase PPT2 (Ppt2).